Reading from the N-terminus, the 185-residue chain is Ribosome-recycling factor (185 aa).

The protein belongs to the RRF family.

The protein localises to the cytoplasm. In terms of biological role, responsible for the release of ribosomes from messenger RNA at the termination of protein biosynthesis. May increase the efficiency of translation by recycling ribosomes from one round of translation to another. In Ectopseudomonas mendocina (strain ymp) (Pseudomonas mendocina), this protein is Ribosome-recycling factor.